Here is a 369-residue protein sequence, read N- to C-terminus: Glutamate 5-kinase (369 aa).

Lys10 is a binding site for ATP. The substrate site is built by Ser50, Asp137, and Asn149. Residues 169 to 170 (TD) and 210 to 216 (TGGMVTK) contribute to the ATP site. Residues 276–349 (EGSIFIDEGA…GKHSEEMLAT (74 aa)) form the PUA domain.

It belongs to the glutamate 5-kinase family.

The protein localises to the cytoplasm. It carries out the reaction L-glutamate + ATP = L-glutamyl 5-phosphate + ADP. The protein operates within amino-acid biosynthesis; L-proline biosynthesis; L-glutamate 5-semialdehyde from L-glutamate: step 1/2. Catalyzes the transfer of a phosphate group to glutamate to form L-glutamate 5-phosphate. The sequence is that of Glutamate 5-kinase from Desulfitobacterium hafniense (strain Y51).